The chain runs to 428 residues: Adenylosuccinate synthetase (428 aa).

Residues 13–19 and 41–43 each bind GTP; these read GDEGKGK and GHT. Asp14 functions as the Proton acceptor in the catalytic mechanism. Mg(2+)-binding residues include Asp14 and Gly41. Residues 14–17, 39–42, Thr130, Arg144, Gln223, Thr238, and Arg302 contribute to the IMP site; these read DEGK and NAGH. Catalysis depends on His42, which acts as the Proton donor. 298-304 provides a ligand contact to substrate; sequence ASTGRRR. GTP is bound by residues Arg304, 330-332, and 412-414; these read KLD and STG.

It belongs to the adenylosuccinate synthetase family. In terms of assembly, homodimer. It depends on Mg(2+) as a cofactor.

It is found in the cytoplasm. It carries out the reaction IMP + L-aspartate + GTP = N(6)-(1,2-dicarboxyethyl)-AMP + GDP + phosphate + 2 H(+). It participates in purine metabolism; AMP biosynthesis via de novo pathway; AMP from IMP: step 1/2. Functionally, plays an important role in the de novo pathway of purine nucleotide biosynthesis. Catalyzes the first committed step in the biosynthesis of AMP from IMP. In Dichelobacter nodosus (strain VCS1703A), this protein is Adenylosuccinate synthetase.